A 507-amino-acid chain; its full sequence is Fatty acid resistance protein FarB (507 aa).

The next 14 helical transmembrane spans lie at 8–28, 52–72, 78–98, 109–129, 136–156, 164–184, 199–219, 233–253, 274–294, 303–323, 334–354, 363–383, 399–419, and 478–498; these read GAALAWVTLSLGLAVFMEVLD, WVITSFSVANAVSVPLTGFLA, VKLFTAAAAGFVIASWLCGIA, ILQGFIAGPLIPLSQSLLMAS, MLALALWAMTVVVAPVLGPIL, WHWGWIFFINIPIGIISAWIT, PTDYVGLTLMMVGIGALQMML, IITLGITALVCLSYFIVWELG, IATSLGFMVYMGTLTLLPLVL, AWAGLAAAPVGILPVFLSPLI, LLVTASFLTFAFTFYWRTDFY, IWPQFWQGVGVAMFFLPLTTI, LSNFLRVLMGGVGVSVVSTLW, and IFLAGSILFIVLIPIVWLAKP.

The protein belongs to the major facilitator superfamily. EmrB family. In terms of assembly, probably part of a tripartite efflux system FarAB-MtrE, which is composed of an inner membrane transporter, FarB, a periplasmic membrane fusion protein, FarA, and an outer membrane component, MtrE.

The protein localises to the cell inner membrane. Its function is as follows. Mediates resistance to long-chained antibacterial fatty acids (FAs). Function is dependent on the MtrE outer membrane protein. In Neisseria gonorrhoeae, this protein is Fatty acid resistance protein FarB.